Consider the following 235-residue polypeptide: uncharacterized protein (235 aa).

2 disordered regions span residues 60-96 and 192-235; these read SSNR…QKKT and LNTS…YDSF. Residues 80-93 show a composition bias toward polar residues; sequence SFQNMNSSMPSSTQ. A compositionally biased stretch (acidic residues) spans 197 to 214; that stretch reads SEDDTESIVETDYSEEEK.

Belongs to the asfivirus DP238L family.

This is an uncharacterized protein from Ornithodoros (relapsing fever ticks).